The sequence spans 420 residues: Serine hydroxymethyltransferase (420 aa).

(6S)-5,6,7,8-tetrahydrofolate-binding positions include leucine 123 and 127 to 129; that span reads GHL. Residue lysine 232 is modified to N6-(pyridoxal phosphate)lysine. 357–359 provides a ligand contact to (6S)-5,6,7,8-tetrahydrofolate; the sequence is SPF.

It belongs to the SHMT family. In terms of assembly, homodimer. Requires pyridoxal 5'-phosphate as cofactor.

The protein resides in the cytoplasm. It carries out the reaction (6R)-5,10-methylene-5,6,7,8-tetrahydrofolate + glycine + H2O = (6S)-5,6,7,8-tetrahydrofolate + L-serine. Its pathway is one-carbon metabolism; tetrahydrofolate interconversion. It functions in the pathway amino-acid biosynthesis; glycine biosynthesis; glycine from L-serine: step 1/1. Catalyzes the reversible interconversion of serine and glycine with tetrahydrofolate (THF) serving as the one-carbon carrier. This reaction serves as the major source of one-carbon groups required for the biosynthesis of purines, thymidylate, methionine, and other important biomolecules. Also exhibits THF-independent aldolase activity toward beta-hydroxyamino acids, producing glycine and aldehydes, via a retro-aldol mechanism. This chain is Serine hydroxymethyltransferase, found in Streptococcus pyogenes serotype M2 (strain MGAS10270).